Reading from the N-terminus, the 185-residue chain is MTVSIYSLFVIAVALALDAFGVSLSIGLSKNLRYKNKALFCISFGFFQFMLAYIGSYLGVLFNKYILVIPNIIGGIVIFVVGILMLKDGMKKDNKHMNIHKKMYFILGISVSIDAAIVGFTVLNSITSKLLLLESTIFIGIITSILCLIAFLISGYLKRINTISKYANYIGGVILMLFGLEMIFM.

6 consecutive transmembrane segments (helical) span residues 8-28, 42-62, 66-86, 103-123, 137-157, and 165-185; these read LFVIAVALALDAFGVSLSIGL, ISFGFFQFMLAYIGSYLGVLF, ILVIPNIIGGIVIFVVGILML, MYFILGISVSIDAAIVGFTVL, IFIGIITSILCLIAFLISGYL, and KYANYIGGVILMLFGLEMIFM.

Belongs to the MntP (TC 9.B.29) family.

It is found in the cell membrane. Probably functions as a manganese efflux pump. The protein is Putative manganese efflux pump MntP of Clostridium novyi (strain NT).